The sequence spans 232 residues: 2,3,4,5-tetrahydropyridine-2,6-dicarboxylate N-acetyltransferase (232 aa).

This sequence belongs to the transferase hexapeptide repeat family. DapH subfamily.

It carries out the reaction (S)-2,3,4,5-tetrahydrodipicolinate + acetyl-CoA + H2O = L-2-acetamido-6-oxoheptanedioate + CoA. It functions in the pathway amino-acid biosynthesis; L-lysine biosynthesis via DAP pathway; LL-2,6-diaminopimelate from (S)-tetrahydrodipicolinate (acetylase route): step 1/3. Catalyzes the transfer of an acetyl group from acetyl-CoA to tetrahydrodipicolinate. This chain is 2,3,4,5-tetrahydropyridine-2,6-dicarboxylate N-acetyltransferase, found in Streptococcus thermophilus (strain CNRZ 1066).